The sequence spans 525 residues: Keratin, type II cytoskeletal 71 (525 aa).

Residues 1–131 (MSRQFTCKSG…DPEIQKVRAQ (131 aa)) form a head region. Positions 132–167 (EREQIKALNNKFASFIDKVRFLEQQNQVLETKWELL) are coil 1A. Positions 132–445 (EREQIKALNN…KLLESEECRM (314 aa)) constitute an IF rod domain. The tract at residues 168–186 (QQLDLNNCKNNLEPILEGY) is linker 1. The tract at residues 187–278 (ISNLRKQLET…CLYEAEIAQI (92 aa)) is coil 1B. A linker 12 region spans residues 279–302 (QSHISDMSVILSMDNNRDLNLDSI). The segment at 303-441 (IDEVRAQYED…ATYRKLLESE (139 aa)) is coil 2. The interval 442–525 (ECRMSGEFPS…LSAPSKKASR (84 aa)) is tail. The disordered stretch occupies residues 492–525 (VRGGESRSRSSTTDYKDALGKGSSLSAPSKKASR). Residues 495–510 (GESRSRSSTTDYKDAL) are compositionally biased toward basic and acidic residues.

The protein belongs to the intermediate filament family. Heterodimer of a type I and a type II keratin. Associates with KRT16 and/or KRT17.

The protein resides in the cytoplasm. It localises to the cytoskeleton. Its function is as follows. Plays a central role in hair formation. Essential component of keratin intermediate filaments in the inner root sheath (IRS) of the hair follicle. The polypeptide is Keratin, type II cytoskeletal 71 (KRT71) (Bos taurus (Bovine)).